The chain runs to 266 residues: Probable septum site-determining protein MinC (266 aa).

The segment covering 1 to 21 (MSEAESTPVEEPVVESTEGSE) has biased composition (low complexity). The interval 1–28 (MSEAESTPVEEPVVESTEGSEAIPEVEQ) is disordered.

It belongs to the MinC family. As to quaternary structure, interacts with MinD and FtsZ.

Functionally, cell division inhibitor that blocks the formation of polar Z ring septums. Rapidly oscillates between the poles of the cell to destabilize FtsZ filaments that have formed before they mature into polar Z rings. Prevents FtsZ polymerization. The sequence is that of Probable septum site-determining protein MinC from Thermosynechococcus vestitus (strain NIES-2133 / IAM M-273 / BP-1).